The primary structure comprises 1037 residues: Presequence protease, mitochondrial (1037 aa).

The N-terminal 28 residues, 1 to 28, are a transit peptide targeting the mitochondrion; sequence MWRCGGRQGLCVLRRLSGGHAHHRAWRW. Position 104 (His104) interacts with Zn(2+). Glu107 functions as the Proton acceptor in the catalytic mechanism. His108 lines the Zn(2+) pocket. A disulfide bond links Cys119 and Cys556. Residue Glu180 is part of the active site. A Zn(2+)-binding site is contributed by Glu205. The residue at position 759 (Lys759) is an N6-acetyllysine. N6-acetyllysine; alternate is present on Lys770. N6-succinyllysine; alternate is present on Lys770. Residues 804–814 show a composition bias toward basic residues; sequence GRSKKERRPVR. The tract at residues 804–834 is disordered; the sequence is GRSKKERRPVRPHTVEKPVPSSSGGDAHVPH. The residue at position 849 (Lys849) is an N6-succinyllysine. Lys884 is subject to N6-acetyllysine. Position 946 is an N6-succinyllysine (Lys946).

The protein belongs to the peptidase M16 family. PreP subfamily. Monomer and homodimer; homodimerization is induced by binding of the substrate. The cofactor is Zn(2+). In terms of processing, a disulfide bond locks the enzyme in the closed conformation preventing substrate entry into the catalytic chamber. Widely expressed. Expressed at higher level in muscle and heart compared to brain, pancreas, liver, lung and placenta.

The protein localises to the mitochondrion. It localises to the mitochondrion matrix. Its activity is regulated as follows. Mainly exists in a closed and catalytically competent conformation but a closed-to-open switch allows substrate entry into the catalytic chamber. Substrate binding induces closure and dimerization. A disulfide bond may lock the enzyme in a closed conformation preventing substrate entry into the catalytic chamber, participating in redox regulation of the enzyme. Inhibited by metal-chelating agents. Inhibited by nickel and zinc excess, and slightly activated by manganese. Functionally, metalloendopeptidase of the mitochondrial matrix that functions in peptide cleavage and degradation rather than in protein processing. Has an ATP-independent activity. Specifically cleaves peptides in the range of 5 to 65 residues. Shows a preference for cleavage after small polar residues and before basic residues, but without any positional preference. Degrades the transit peptides of mitochondrial proteins after their cleavage. Also degrades other unstructured peptides. It is also able to degrade amyloid-beta protein 40, one of the peptides produced by APP processing, when it accumulates in mitochondrion. It is a highly efficient protease, at least toward amyloid-beta protein 40. Cleaves that peptide at a specific position and is probably not processive, releasing digested peptides intermediates that can be further cleaved subsequently. It is also able to degrade amyloid-beta protein 42. The sequence is that of Presequence protease, mitochondrial from Homo sapiens (Human).